The primary structure comprises 379 residues: Succinyl-diaminopimelate desuccinylase (379 aa).

Zn(2+) is bound at residue histidine 68. Residue aspartate 70 is part of the active site. Aspartate 101 serves as a coordination point for Zn(2+). Glutamate 135 serves as the catalytic Proton acceptor. Zn(2+)-binding residues include glutamate 136, glutamate 164, and histidine 350.

The protein belongs to the peptidase M20A family. DapE subfamily. In terms of assembly, homodimer. The cofactor is Zn(2+). Requires Co(2+) as cofactor.

The enzyme catalyses N-succinyl-(2S,6S)-2,6-diaminopimelate + H2O = (2S,6S)-2,6-diaminopimelate + succinate. It participates in amino-acid biosynthesis; L-lysine biosynthesis via DAP pathway; LL-2,6-diaminopimelate from (S)-tetrahydrodipicolinate (succinylase route): step 3/3. Functionally, catalyzes the hydrolysis of N-succinyl-L,L-diaminopimelic acid (SDAP), forming succinate and LL-2,6-diaminopimelate (DAP), an intermediate involved in the bacterial biosynthesis of lysine and meso-diaminopimelic acid, an essential component of bacterial cell walls. The polypeptide is Succinyl-diaminopimelate desuccinylase (Bordetella bronchiseptica (strain ATCC BAA-588 / NCTC 13252 / RB50) (Alcaligenes bronchisepticus)).